The sequence spans 218 residues: Octanoyltransferase (218 aa).

Residues 31–206 (REAADEVWLV…QLVKHLDYAE (176 aa)) enclose the BPL/LPL catalytic domain. Residues 70 to 77 (RGGQVTYH), 137 to 139 (SLG), and 150 to 152 (GLA) contribute to the substrate site. Residue cysteine 168 is the Acyl-thioester intermediate of the active site.

This sequence belongs to the LipB family.

It localises to the cytoplasm. The catalysed reaction is octanoyl-[ACP] + L-lysyl-[protein] = N(6)-octanoyl-L-lysyl-[protein] + holo-[ACP] + H(+). Its pathway is protein modification; protein lipoylation via endogenous pathway; protein N(6)-(lipoyl)lysine from octanoyl-[acyl-carrier-protein]: step 1/2. Catalyzes the transfer of endogenously produced octanoic acid from octanoyl-acyl-carrier-protein onto the lipoyl domains of lipoate-dependent enzymes. Lipoyl-ACP can also act as a substrate although octanoyl-ACP is likely to be the physiological substrate. The chain is Octanoyltransferase from Pseudomonas syringae pv. syringae (strain B728a).